The sequence spans 277 residues: MSSTWYPPPSRPRPVEGGIKARSTRGAIAQTWWSERFIAVLEDIGLGNRLQRGRSYARKGQVISLQVDAGLVTALVQGSRARPYRIRIGIPAFGKSQWAHVERTLAENAWYAAKLLSGEMPEDIEDVFAGLGLSLFPGTARELSLDCSCPDYAVPCKHLAATFYLLAESFDEDPFAILAWRGREREDLLANLAAARADGAAPAADHAEQVAQPLTDCLDRYYARQADINVPSPPATPSTALLDQLPDTGLSARGRPLTELLRPAYHALTHHHNSAGG.

An SWIM-type zinc finger spans residues 139-167 (TARELSLDCSCPDYAVPCKHLAATFYLLA).

This is an uncharacterized protein from Mycobacterium tuberculosis (strain ATCC 25618 / H37Rv).